The following is a 248-amino-acid chain: Deoxyribose-phosphate aldolase (248 aa).

The active-site Proton donor/acceptor is the aspartate 106. Catalysis depends on lysine 168, which acts as the Schiff-base intermediate with acetaldehyde. The active-site Proton donor/acceptor is lysine 197.

This sequence belongs to the DeoC/FbaB aldolase family. DeoC type 1 subfamily.

It is found in the cytoplasm. The catalysed reaction is 2-deoxy-D-ribose 5-phosphate = D-glyceraldehyde 3-phosphate + acetaldehyde. Its pathway is carbohydrate degradation; 2-deoxy-D-ribose 1-phosphate degradation; D-glyceraldehyde 3-phosphate and acetaldehyde from 2-deoxy-alpha-D-ribose 1-phosphate: step 2/2. In terms of biological role, catalyzes a reversible aldol reaction between acetaldehyde and D-glyceraldehyde 3-phosphate to generate 2-deoxy-D-ribose 5-phosphate. This Sinorhizobium medicae (strain WSM419) (Ensifer medicae) protein is Deoxyribose-phosphate aldolase.